The chain runs to 346 residues: 3 beta-hydroxysteroid dehydrogenase/Delta 5--&gt;4-isomerase (346 aa).

The active-site Proton acceptor is Y147. Position 151 (K151) interacts with NAD(+).

The protein belongs to the 3-beta-HSD family.

It carries out the reaction a 3beta-hydroxy-Delta(5)-steroid + NAD(+) = a 3-oxo-Delta(5)-steroid + NADH + H(+). The catalysed reaction is a 3-oxo-Delta(5)-steroid = a 3-oxo-Delta(4)-steroid. It participates in lipid metabolism; steroid biosynthesis. Its function is as follows. Catalyzes the oxidative conversion of Delta(5)-ene-3-beta-hydroxy steroid, and the oxidative conversion of ketosteroids. The 3-beta-HSD enzymatic system plays a crucial role in the biosynthesis of all classes of hormonal steroids. During viral infection, steroid production contributes to virulence by inhibiting the host inflammatory response. This is 3 beta-hydroxysteroid dehydrogenase/Delta 5--&gt;4-isomerase (OPG174) from Vaccinia virus (strain Western Reserve) (VACV).